Here is a 292-residue protein sequence, read N- to C-terminus: Formamidopyrimidine-DNA glycosylase (292 aa).

The active-site Schiff-base intermediate with DNA is the P2. E3 functions as the Proton donor in the catalytic mechanism. The active-site Proton donor; for beta-elimination activity is K58. 3 residues coordinate DNA: H103, R122, and K165. The FPG-type zinc finger occupies R256–K292. Catalysis depends on R282, which acts as the Proton donor; for delta-elimination activity.

It belongs to the FPG family. In terms of assembly, monomer. Zn(2+) serves as cofactor.

The catalysed reaction is Hydrolysis of DNA containing ring-opened 7-methylguanine residues, releasing 2,6-diamino-4-hydroxy-5-(N-methyl)formamidopyrimidine.. It catalyses the reaction 2'-deoxyribonucleotide-(2'-deoxyribose 5'-phosphate)-2'-deoxyribonucleotide-DNA = a 3'-end 2'-deoxyribonucleotide-(2,3-dehydro-2,3-deoxyribose 5'-phosphate)-DNA + a 5'-end 5'-phospho-2'-deoxyribonucleoside-DNA + H(+). Functionally, involved in base excision repair of DNA damaged by oxidation or by mutagenic agents. Acts as a DNA glycosylase that recognizes and removes damaged bases. Has a preference for oxidized purines, such as 7,8-dihydro-8-oxoguanine (8-oxoG). Has AP (apurinic/apyrimidinic) lyase activity and introduces nicks in the DNA strand. Cleaves the DNA backbone by beta-delta elimination to generate a single-strand break at the site of the removed base with both 3'- and 5'-phosphates. This chain is Formamidopyrimidine-DNA glycosylase, found in Methylocella silvestris (strain DSM 15510 / CIP 108128 / LMG 27833 / NCIMB 13906 / BL2).